We begin with the raw amino-acid sequence, 454 residues long: Cobyrinate a,c-diamide synthase (454 aa).

The region spanning 247–442 is the GATase cobBQ-type domain; it reads KIGIAMDSAF…IHAHWASNPN (196 aa). Residue cysteine 329 is the Nucleophile of the active site.

It belongs to the CobB/CbiA family. Requires Mg(2+) as cofactor.

The catalysed reaction is cob(II)yrinate + 2 L-glutamine + 2 ATP + 2 H2O = cob(II)yrinate a,c diamide + 2 L-glutamate + 2 ADP + 2 phosphate + 2 H(+). It participates in cofactor biosynthesis; adenosylcobalamin biosynthesis; cob(II)yrinate a,c-diamide from sirohydrochlorin (anaerobic route): step 10/10. In terms of biological role, catalyzes the ATP-dependent amidation of the two carboxylate groups at positions a and c of cobyrinate, using either L-glutamine or ammonia as the nitrogen source. The protein is Cobyrinate a,c-diamide synthase of Leptospira interrogans serogroup Icterohaemorrhagiae serovar copenhageni (strain Fiocruz L1-130).